Consider the following 728-residue polypeptide: Catalase-peroxidase 1 (728 aa).

An N-terminal signal peptide occupies residues 1–22; sequence MDKTQSSQGKCPVMHGANSAVA. The segment at residues 97–225 is a cross-link (tryptophyl-tyrosyl-methioninium (Trp-Tyr) (with M-251)); sequence WHSAGTYRVA…LAAVMMGLIY (129 aa). The active-site Proton acceptor is histidine 98. A cross-link (tryptophyl-tyrosyl-methioninium (Tyr-Met) (with W-97)) is located at residues 225-251; that stretch reads YVNPEGVDGKPDPLRTAQDVRVTFARM. Residue histidine 266 coordinates heme b.

Belongs to the peroxidase family. Peroxidase/catalase subfamily. In terms of assembly, homodimer or homotetramer. It depends on heme b as a cofactor. Formation of the three residue Trp-Tyr-Met cross-link is important for the catalase, but not the peroxidase activity of the enzyme.

It carries out the reaction H2O2 + AH2 = A + 2 H2O. The catalysed reaction is 2 H2O2 = O2 + 2 H2O. Its function is as follows. Bifunctional enzyme with both catalase and broad-spectrum peroxidase activity. This is Catalase-peroxidase 1 from Shewanella sp. (strain MR-7).